The sequence spans 230 residues: Bidirectional sugar transporter SWEET2b (230 aa).

Residues methionine 1–aspartate 6 are Extracellular-facing. The helical transmembrane segment at isoleucine 7–proline 27 threads the bilayer. Residues glycine 13–arginine 98 enclose the MtN3/slv 1 domain. At valine 28–glycine 45 the chain is on the cytoplasmic side. A helical membrane pass occupies residues leucine 46–valine 66. Residues alanine 67 to leucine 72 lie on the Extracellular side of the membrane. A helical transmembrane segment spans residues valine 73–phenylalanine 93. Over tyrosine 94–lysine 103 the chain is Cytoplasmic. Residues isoleucine 104 to phenylalanine 124 form a helical membrane-spanning segment. At phenylalanine 125 to alanine 137 the chain is on the extracellular side. Residues glutamine 133–lysine 217 form the MtN3/slv 2 domain. Residues valine 138–isoleucine 158 traverse the membrane as a helical segment. The Cytoplasmic portion of the chain corresponds to arginine 159 to proline 167. A helical transmembrane segment spans residues phenylalanine 168–leucine 188. Topologically, residues arginine 189 to aspartate 190 are extracellular. The helical transmembrane segment at phenylalanine 191–tyrosine 211 threads the bilayer. Over alanine 212–alanine 230 the chain is Cytoplasmic.

The protein belongs to the SWEET sugar transporter family. As to quaternary structure, forms homooligomers and/or heterooligomers.

It is found in the cell membrane. In terms of biological role, mediates both low-affinity uptake and efflux of sugar across the plasma membrane. This chain is Bidirectional sugar transporter SWEET2b (SWEET2B), found in Oryza sativa subsp. indica (Rice).